A 486-amino-acid chain; its full sequence is Protein nucleotidyltransferase YdiU (486 aa).

The ATP site is built by G90, G92, R93, K113, D125, G126, R176, and R183. Residue D252 is the Proton acceptor of the active site. The Mg(2+) site is built by N253 and D262. Residue D262 participates in ATP binding.

It belongs to the SELO family. Requires Mg(2+) as cofactor. Mn(2+) is required as a cofactor.

It catalyses the reaction L-seryl-[protein] + ATP = 3-O-(5'-adenylyl)-L-seryl-[protein] + diphosphate. The catalysed reaction is L-threonyl-[protein] + ATP = 3-O-(5'-adenylyl)-L-threonyl-[protein] + diphosphate. It carries out the reaction L-tyrosyl-[protein] + ATP = O-(5'-adenylyl)-L-tyrosyl-[protein] + diphosphate. The enzyme catalyses L-histidyl-[protein] + UTP = N(tele)-(5'-uridylyl)-L-histidyl-[protein] + diphosphate. It catalyses the reaction L-seryl-[protein] + UTP = O-(5'-uridylyl)-L-seryl-[protein] + diphosphate. The catalysed reaction is L-tyrosyl-[protein] + UTP = O-(5'-uridylyl)-L-tyrosyl-[protein] + diphosphate. In terms of biological role, nucleotidyltransferase involved in the post-translational modification of proteins. It can catalyze the addition of adenosine monophosphate (AMP) or uridine monophosphate (UMP) to a protein, resulting in modifications known as AMPylation and UMPylation. This chain is Protein nucleotidyltransferase YdiU, found in Stutzerimonas stutzeri (strain A1501) (Pseudomonas stutzeri).